Here is a 151-residue protein sequence, read N- to C-terminus: Putative pre-16S rRNA nuclease (151 aa).

The protein belongs to the YqgF nuclease family.

The protein resides in the cytoplasm. In terms of biological role, could be a nuclease involved in processing of the 5'-end of pre-16S rRNA. This chain is Putative pre-16S rRNA nuclease, found in Neisseria meningitidis serogroup B (strain ATCC BAA-335 / MC58).